We begin with the raw amino-acid sequence, 697 residues long: Potassium-transporting ATPase ATP-binding subunit (697 aa).

A run of 4 helical transmembrane segments spans residues 55–75, 82–102, 245–265, and 271–291; these read PIMF…FLPS, GWFN…ANFA, LTFI…YLGF, and VLVA…LSAI. The active-site 4-aspartylphosphate intermediate is the aspartate 324. Residues aspartate 361, glutamate 365, 393-400, and lysine 412 contribute to the ATP site; that span reads FKAETRMS. Mg(2+)-binding residues include aspartate 535 and aspartate 539. The next 3 helical transmembrane spans lie at 605–625, 633–653, and 677–697; these read FAII…LNIM, AILS…PLAM, and GGVI…GLFI.

This sequence belongs to the cation transport ATPase (P-type) (TC 3.A.3) family. Type IA subfamily. The system is composed of three essential subunits: KdpA, KdpB and KdpC.

Its subcellular location is the cell membrane. The catalysed reaction is K(+)(out) + ATP + H2O = K(+)(in) + ADP + phosphate + H(+). Part of the high-affinity ATP-driven potassium transport (or Kdp) system, which catalyzes the hydrolysis of ATP coupled with the electrogenic transport of potassium into the cytoplasm. This subunit is responsible for energy coupling to the transport system and for the release of the potassium ions to the cytoplasm. In Bacillus cereus (strain AH187), this protein is Potassium-transporting ATPase ATP-binding subunit.